The sequence spans 234 residues: MMRWLGYVIGCFAAGVVALNLYFFAAIASWQVFNPASSAFMRAERMRLCGANLVTCGIDHRWVPYDQISRNLKRAVIASEDADFVSHSGWEVDAMLDAWEKNKRRGHVVAGGSTITQQLAKNLFLSGERHYLRKGEELVITWMLEFWLDKERILEIYLNSVEWGEGVFGAEAAAQHYFKRPASQLTVGQAARLAAALPAPKCFDKKRYCANVHISFTRKATVIANRMGSATLPD.

The chain crosses the membrane as a helical span at residues 8–28; it reads VIGCFAAGVVALNLYFFAAIA.

The protein belongs to the glycosyltransferase 51 family.

The protein resides in the cell inner membrane. The catalysed reaction is [GlcNAc-(1-&gt;4)-Mur2Ac(oyl-L-Ala-gamma-D-Glu-L-Lys-D-Ala-D-Ala)](n)-di-trans,octa-cis-undecaprenyl diphosphate + beta-D-GlcNAc-(1-&gt;4)-Mur2Ac(oyl-L-Ala-gamma-D-Glu-L-Lys-D-Ala-D-Ala)-di-trans,octa-cis-undecaprenyl diphosphate = [GlcNAc-(1-&gt;4)-Mur2Ac(oyl-L-Ala-gamma-D-Glu-L-Lys-D-Ala-D-Ala)](n+1)-di-trans,octa-cis-undecaprenyl diphosphate + di-trans,octa-cis-undecaprenyl diphosphate + H(+). It participates in cell wall biogenesis; peptidoglycan biosynthesis. Its function is as follows. Peptidoglycan polymerase that catalyzes glycan chain elongation from lipid-linked precursors. The chain is Biosynthetic peptidoglycan transglycosylase from Ralstonia nicotianae (strain ATCC BAA-1114 / GMI1000) (Ralstonia solanacearum).